A 320-amino-acid polypeptide reads, in one-letter code: MQNIPTGVILLNMGGPTQTKDVRPFLYNLFSDREIIPLGPRLMQKPLAWLIAKRRAPKSAATYERIGGGSPLKQITEAQAEALEKSLQAHGNFTVTYAMRYWPPYCDEALDYLLSKGVERLVALSLYPHYSKATTGSSLTQLHKTLKKKNISLPLTEIPSWPKQRDYIAAIAANIKKGLATFHGEKTEIVYSAHSLPTSFIEAGDPYVEHTKQSIGAIEEITGKRGRLCFQSKSGPVEWLEPSTPDVLIQLAQEGVKNILMVPISFVSDHVETLYEIDILYKKQAKKLGMRLTSCPSLNTQEQFITGLRQLVLESSVNSD.

Fe cation contacts are provided by histidine 194 and glutamate 272.

Belongs to the ferrochelatase family.

It is found in the cytoplasm. It carries out the reaction heme b + 2 H(+) = protoporphyrin IX + Fe(2+). Its pathway is porphyrin-containing compound metabolism; protoheme biosynthesis; protoheme from protoporphyrin-IX: step 1/1. Functionally, catalyzes the ferrous insertion into protoporphyrin IX. The polypeptide is Ferrochelatase (Desulfotalea psychrophila (strain LSv54 / DSM 12343)).